We begin with the raw amino-acid sequence, 1062 residues long: Valine--tRNA ligase, mitochondrial (1062 aa).

The N-terminal 15 residues, 1–15 (MPHLPLASFRPPLRG), are a transit peptide targeting the mitochondrion. The tract at residues 1 to 73 (MPHLPLASFR…AKGKPPAEST (73 aa)) is disordered. The segment covering 42–56 (RNREAKQKRLREKQA) has biased composition (basic and acidic residues). The 'HIGH' region signature appears at 146 to 156 (PNVTGSLHIGH). The 'KMSKS' region motif lies at 659 to 663 (KMSKS). Lys662 serves as a coordination point for ATP.

It belongs to the class-I aminoacyl-tRNA synthetase family.

The protein localises to the mitochondrion. It catalyses the reaction tRNA(Val) + L-valine + ATP = L-valyl-tRNA(Val) + AMP + diphosphate. In terms of biological role, catalyzes the attachment of valine to tRNA(Val) in a two-step reaction: valine is first activated by ATP to form Val-AMP and then transferred to the acceptor end of tRNA(Val). The protein is Valine--tRNA ligase, mitochondrial (VARS2) of Sus scrofa (Pig).